Here is a 252-residue protein sequence, read N- to C-terminus: Small ribosomal subunit protein uS2B (252 aa).

S2 carries the post-translational modification N-acetylserine. 2 stretches are compositionally biased toward acidic residues: residues 213–229 and 241–252; these read VAEE…EEVK and EWAEENADNVEW. Residues 213–252 are disordered; that stretch reads VAEEAAAAEEGEEEEVKEEVTEGQAEATEWAEENADNVEW.

The protein belongs to the universal ribosomal protein uS2 family. Component of the small ribosomal subunit. Mature ribosomes consist of a small (40S) and a large (60S) subunit. The 40S subunit contains about 33 different proteins and 1 molecule of RNA (18S). The 60S subunit contains about 49 different proteins and 3 molecules of RNA (25S, 5.8S and 5S). Interacts with RPS21.

It is found in the cytoplasm. Its function is as follows. Required for the assembly and/or stability of the 40S ribosomal subunit. Required for the processing of the 20S rRNA-precursor to mature 18S rRNA in a late step of the maturation of 40S ribosomal subunits. The protein is Small ribosomal subunit protein uS2B of Saccharomyces cerevisiae (strain RM11-1a) (Baker's yeast).